A 165-amino-acid polypeptide reads, in one-letter code: UI (165 aa).

Residues Met-1–His-18 form the signal peptide. Residue Val-163 is modified to Valine amide.

The protein belongs to the sauvagine/corticotropin-releasing factor/urotensin I family.

The protein localises to the secreted. Its function is as follows. Urotensin is found in the teleost caudal neurosecretory system. It has a suggested role in osmoregulation and as a corticotropin-releasing factor. The non-hormonal portion of this precursor may be a urotensin binding protein, urophysin. The polypeptide is UI (Oncorhynchus mykiss (Rainbow trout)).